We begin with the raw amino-acid sequence, 598 residues long: Probable translation initiation factor IF-2 (598 aa).

In terms of domain architecture, tr-type G spans 3–223 (LRCPIVSVLG…ISGLAQRFME (221 aa)). The segment at 12-19 (GHVDHGKT) is G1. Position 12–19 (12–19 (GHVDHGKT)) interacts with GTP. A G2 region spans residues 37–41 (GITQH). The tract at residues 76–79 (DTPG) is G3. GTP contacts are provided by residues 76 to 80 (DTPGH) and 130 to 133 (NKID). Positions 130–133 (NKID) are G4. Residues 200–202 (SAM) form a G5 region.

Belongs to the TRAFAC class translation factor GTPase superfamily. Classic translation factor GTPase family. IF-2 subfamily.

Functionally, function in general translation initiation by promoting the binding of the formylmethionine-tRNA to ribosomes. Seems to function along with eIF-2. This chain is Probable translation initiation factor IF-2, found in Methanococcus aeolicus (strain ATCC BAA-1280 / DSM 17508 / OCM 812 / Nankai-3).